The following is a 134-amino-acid chain: MSGERRKVRAVFGVAHIFASFNDTFVHVTDLSGKETSLVLTGGMKVKADRDEASPYAAMLAAQDVAQRCKELGITALHINVRATGGNKTKTPGPGAQSLRALARSGMRIGRIEDVTPIPTDSTRRKGGRRGRRL.

The disordered stretch occupies residues 115 to 134; sequence VTPIPTDSTRRKGGRRGRRL. A compositionally biased stretch (basic residues) spans 125–134; the sequence is RKGGRRGRRL.

The protein belongs to the universal ribosomal protein uS11 family.

In Syntrichia ruralis (Great hairy screw-moss), this protein is Small ribosomal subunit protein uS11 (RPS14).